Here is a 359-residue protein sequence, read N- to C-terminus: Alkanal monooxygenase alpha chain (359 aa).

This sequence belongs to the bacterial luciferase oxidoreductase family. In terms of assembly, heterodimer of an alpha and a beta chain.

The enzyme catalyses a long-chain fatty aldehyde + FMNH2 + O2 = a long-chain fatty acid + hnu + FMN + H2O + 2 H(+). In terms of biological role, light-emitting reaction in luminous bacteria. In Photorhabdus laumondii subsp. laumondii (strain DSM 15139 / CIP 105565 / TT01) (Photorhabdus luminescens subsp. laumondii), this protein is Alkanal monooxygenase alpha chain (luxA).